The primary structure comprises 103 residues: Large ribosomal subunit protein eL42 (103 aa).

The Zn(2+) site is built by Cys-18 and Cys-21. The C4-type zinc-finger motif lies at 18-81; sequence CPKCRTHTEH…TVLKLKCSKC (64 aa). The disordered stretch occupies residues 40–62; sequence LSEGERRYARKKKGYGSKRKPEQ. A compositionally biased stretch (basic residues) spans 47-57; sequence YARKKKGYGSK. Cys-78 and Cys-81 together coordinate Zn(2+).

The protein belongs to the eukaryotic ribosomal protein eL42 family. In terms of assembly, part of the 50S ribosomal subunit. It depends on Zn(2+) as a cofactor.

Functionally, binds to the 23S rRNA. The protein is Large ribosomal subunit protein eL42 of Desulfurococcus amylolyticus (strain DSM 18924 / JCM 16383 / VKM B-2413 / 1221n) (Desulfurococcus kamchatkensis).